The sequence spans 407 residues: Aminomethyltransferase, mitochondrial (407 aa).

The N-terminal 29 residues, 1 to 29, are a transit peptide targeting the mitochondrion; it reads MRGGLWQVGQSITRRLGQSDKKTIVRRWY. Residues Glu-234, Arg-265, and Tyr-403 each contribute to the substrate site.

It belongs to the GcvT family. The glycine cleavage system is composed of four proteins: P, T, L and H.

It localises to the mitochondrion. The catalysed reaction is N(6)-[(R)-S(8)-aminomethyldihydrolipoyl]-L-lysyl-[protein] + (6S)-5,6,7,8-tetrahydrofolate = N(6)-[(R)-dihydrolipoyl]-L-lysyl-[protein] + (6R)-5,10-methylene-5,6,7,8-tetrahydrofolate + NH4(+). Functionally, the glycine cleavage system catalyzes the degradation of glycine. In Flaveria trinervia (Clustered yellowtops), this protein is Aminomethyltransferase, mitochondrial (GDCST).